Here is a 352-residue protein sequence, read N- to C-terminus: N-acetyl-gamma-glutamyl-phosphate reductase (352 aa).

Residue C155 is part of the active site.

The protein belongs to the NAGSA dehydrogenase family. Type 1 subfamily.

It is found in the cytoplasm. The catalysed reaction is N-acetyl-L-glutamate 5-semialdehyde + phosphate + NADP(+) = N-acetyl-L-glutamyl 5-phosphate + NADPH + H(+). The protein operates within amino-acid biosynthesis; L-arginine biosynthesis; N(2)-acetyl-L-ornithine from L-glutamate: step 3/4. Its function is as follows. Catalyzes the NADPH-dependent reduction of N-acetyl-5-glutamyl phosphate to yield N-acetyl-L-glutamate 5-semialdehyde. In Gloeothece citriformis (strain PCC 7424) (Cyanothece sp. (strain PCC 7424)), this protein is N-acetyl-gamma-glutamyl-phosphate reductase.